We begin with the raw amino-acid sequence, 462 residues long: Sonic hedgehog protein (462 aa).

The first 23 residues, 1–23 (MLLLARCLLLVLVSSLLVCSGLA), serve as a signal peptide directing secretion. A lipid anchor (N-palmitoyl cysteine) is attached at Cys-24. The short motif at 32–38 (KRRHPKK) is the Cardin-Weintraub element. Ca(2+)-binding residues include Glu-89, Glu-90, Asp-95, Thr-125, Glu-126, Asp-129, and Asp-131. The Zn(2+) site is built by His-140, Asp-147, and His-182. Gly-197 carries the Cholesterol glycine ester lipid modification. Asn-278 carries N-linked (GlcNAc...) asparagine glycosylation. 2 disordered regions span residues 279 to 302 (DSATGEPEASSGSGPPSGGALGPR) and 395 to 414 (TDRGGDSGGGDRGGGGGRVA). The span at 283 to 292 (GEPEASSGSG) shows a compositional bias: low complexity. Residues 400–412 (DSGGGDRGGGGGR) show a composition bias toward gly residues.

It belongs to the hedgehog family. In terms of assembly, multimer. As to quaternary structure, interacts with HHATL/GUP1 which negatively regulates HHAT-mediated palmitoylation of the SHH N-terminus. Interacts with BOC and CDON. Interacts with HHIP. Interacts with DISP1 via its cholesterol anchor. Interacts with SCUBE2. Interacts with glypican GPC3. The C-terminal domain displays an autoproteolysis activity and a cholesterol transferase activity. Both activities result in the cleavage of the full-length protein and covalent attachment of a cholesterol moiety to the C-terminal of the newly generated N-terminal fragment (ShhN). Cholesterylation is required for the sonic hedgehog protein N-product targeting to lipid rafts and multimerization. ShhN is the active species in both local and long-range signaling, whereas the C-product (ShhC) is degraded in the endoplasmic reticulum. In terms of processing, N-palmitoylation by HHAT of ShhN is required for sonic hedgehog protein N-product multimerization and full activity. It is a prerequisite for the membrane-proximal positioning and the subsequent shedding of this N-terminal peptide. Post-translationally, the lipidated N- and C-terminal peptides of ShhNp can be cleaved (shedding). The N-terminal palmitoylated peptide is cleaved at the Cardin-Weintraub (CW) motif site. The cleavage reduced the interactions with heparan sulfate. The cleavage is enhanced by SCUBE2.

The protein resides in the endoplasmic reticulum membrane. The protein localises to the golgi apparatus membrane. It is found in the secreted. Its subcellular location is the cell membrane. It catalyses the reaction glycyl-L-cysteinyl-[protein] + cholesterol + H(+) = [protein]-C-terminal glycyl cholesterol ester + N-terminal L-cysteinyl-[protein]. In terms of biological role, the C-terminal part of the sonic hedgehog protein precursor displays an autoproteolysis and a cholesterol transferase activity. Both activities result in the cleavage of the full-length protein into two parts (ShhN and ShhC) followed by the covalent attachment of a cholesterol moiety to the C-terminal of the newly generated ShhN. Both activities occur in the endoplasmic reticulum. Once cleaved, ShhC is degraded in the endoplasmic reticulum. The dually lipidated sonic hedgehog protein N-product (ShhNp) is a morphogen which is essential for a variety of patterning events during development. Induces ventral cell fate in the neural tube and somites. Involved in the patterning of the anterior-posterior axis of the developing limb bud. Essential for axon guidance. Binds to the patched (PTCH1) receptor, which functions in association with smoothened (SMO), to activate the transcription of target genes. In the absence of SHH, PTCH1 represses the constitutive signaling activity of SMO. This is Sonic hedgehog protein from Homo sapiens (Human).